The primary structure comprises 88 residues: Small ribosomal subunit protein uS17 (88 aa).

The protein belongs to the universal ribosomal protein uS17 family. As to quaternary structure, part of the 30S ribosomal subunit.

In terms of biological role, one of the primary rRNA binding proteins, it binds specifically to the 5'-end of 16S ribosomal RNA. The sequence is that of Small ribosomal subunit protein uS17 from Mycoplasmopsis agalactiae (strain NCTC 10123 / CIP 59.7 / PG2) (Mycoplasma agalactiae).